A 926-amino-acid chain; its full sequence is Alpha-aminoadipic semialdehyde synthase, mitochondrial (926 aa).

The transit peptide at 1-27 directs the protein to the mitochondrion; sequence MLRVSRTKLGRLSPSLSRGLHHKAVMA. Residues 28-455 are lysine-ketoglutarate reductase; that stretch reads LRREDVNAWE…DAVIASNGML (428 aa). N6-acetyllysine occurs at positions 48 and 56. An N6-acetyllysine; alternate modification is found at Lys-93. Residue Lys-93 is modified to N6-succinyllysine; alternate. Position 128 is an N6-acetyllysine (Lys-128). Position 138 is an N6-acetyllysine; alternate (Lys-138). Position 138 is an N6-succinyllysine; alternate (Lys-138). An N6-succinyllysine modification is found at Lys-274. The residue at position 286 (Lys-286) is an N6-acetyllysine; alternate. Lys-286 carries the N6-succinyllysine; alternate modification. The residue at position 333 (Lys-333) is an N6-succinyllysine. Lys-458 carries the N6-acetyllysine; alternate modification. Lys-458 is modified (N6-succinyllysine; alternate). The tract at residues 477–926 is saccharopine dehydrogenase; it reads MGTKKKVLVL…MYTTQSTIKL (450 aa). Positions 488, 512, and 516 each coordinate NAD(+). Residues Lys-523 and Lys-535 each carry the N6-acetyllysine; alternate modification. 2 positions are modified to N6-succinyllysine; alternate: Lys-523 and Lys-535. 3 residues coordinate NAD(+): Leu-554, Ala-576, and Ser-577. 577-578 is a binding site for L-saccharopine; the sequence is SY. Lys-584 is modified (N6-acetyllysine; alternate). The residue at position 584 (Lys-584) is an N6-succinyllysine; alternate. The NAD(+) site is built by Leu-603, Asp-604, and Pro-605. Asp-604 is an L-saccharopine binding site. Arg-703 contributes to the L-saccharopine binding site. Lys-707 carries the N6-acetyllysine modification. Position 724-726 (724-726) interacts with L-saccharopine; that stretch reads TLR. Lys-732 bears the N6-succinyllysine mark. An N6-acetyllysine modification is found at Lys-739. The residue at position 761 (Lys-761) is an N6-acetyllysine; alternate. Lys-761 carries the post-translational modification N6-succinyllysine; alternate. Lys-780 is subject to N6-acetyllysine.

It in the N-terminal section; belongs to the AlaDH/PNT family. This sequence in the C-terminal section; belongs to the saccharopine dehydrogenase family. Homotetramer.

Its subcellular location is the mitochondrion. The enzyme catalyses L-saccharopine + NADP(+) + H2O = L-lysine + 2-oxoglutarate + NADPH + H(+). The catalysed reaction is L-saccharopine + NAD(+) + H2O = (S)-2-amino-6-oxohexanoate + L-glutamate + NADH + H(+). It participates in amino-acid degradation; L-lysine degradation via saccharopine pathway; glutaryl-CoA from L-lysine: step 1/6. Its pathway is amino-acid degradation; L-lysine degradation via saccharopine pathway; glutaryl-CoA from L-lysine: step 2/6. Bifunctional enzyme that catalyzes the first two steps in lysine degradation. This is Alpha-aminoadipic semialdehyde synthase, mitochondrial from Bos taurus (Bovine).